A 185-amino-acid chain; its full sequence is Large ribosomal subunit protein bL25 (185 aa).

It belongs to the bacterial ribosomal protein bL25 family. CTC subfamily. In terms of assembly, part of the 50S ribosomal subunit; part of the 5S rRNA/L5/L18/L25 subcomplex. Contacts the 5S rRNA. Binds to the 5S rRNA independently of L5 and L18.

In terms of biological role, this is one of the proteins that binds to the 5S RNA in the ribosome where it forms part of the central protuberance. The sequence is that of Large ribosomal subunit protein bL25 from Microcystis aeruginosa (strain NIES-843 / IAM M-2473).